A 204-amino-acid chain; its full sequence is Protein GrpE (204 aa).

Residues 1–12 (MSNEEQAQKDDA) show a composition bias toward basic and acidic residues. Residues 1–32 (MSNEEQAQKDDAQPVNEAAIDATAEQADAEVE) are disordered. Residues 17–26 (EAAIDATAEQ) are compositionally biased toward low complexity.

This sequence belongs to the GrpE family. In terms of assembly, homodimer.

The protein localises to the cytoplasm. Its function is as follows. Participates actively in the response to hyperosmotic and heat shock by preventing the aggregation of stress-denatured proteins, in association with DnaK and GrpE. It is the nucleotide exchange factor for DnaK and may function as a thermosensor. Unfolded proteins bind initially to DnaJ; upon interaction with the DnaJ-bound protein, DnaK hydrolyzes its bound ATP, resulting in the formation of a stable complex. GrpE releases ADP from DnaK; ATP binding to DnaK triggers the release of the substrate protein, thus completing the reaction cycle. Several rounds of ATP-dependent interactions between DnaJ, DnaK and GrpE are required for fully efficient folding. In Pseudoalteromonas atlantica (strain T6c / ATCC BAA-1087), this protein is Protein GrpE.